The sequence spans 99 residues: PFGAEMCKLVPFIQKASVGITVLSLCALSIDRYRAVASWSRIKGIGIPKWTAVEIVLIWVVSVVLAVPEAIGFDMITMDYKGSYLRICLLHPVQKTAFM.

Over 1–8 the chain is Extracellular; that stretch reads PFGAEMCK. Cys-7 and Cys-88 are disulfide-bonded. A helical transmembrane segment spans residues 9 to 30; sequence LVPFIQKASVGITVLSLCALSI. At 31–51 the chain is on the cytoplasmic side; it reads DRYRAVASWSRIKGIGIPKWT. A helical transmembrane segment spans residues 52 to 76; it reads AVEIVLIWVVSVVLAVPEAIGFDMI. The Extracellular portion of the chain corresponds to 77–99; sequence TMDYKGSYLRICLLHPVQKTAFM.

This sequence belongs to the G-protein coupled receptor 1 family. Endothelin receptor subfamily. EDNRB sub-subfamily.

The protein resides in the cell membrane. Its function is as follows. Non-specific receptor for endothelin 1, 2, and 3. Mediates its action by association with G proteins that activate a phosphatidylinositol-calcium second messenger system. The protein is Endothelin receptor type B (EDNRB) of Macaca fascicularis (Crab-eating macaque).